The primary structure comprises 245 residues: Putative [LysW]-aminoadipate/[LysW]-glutamate kinase (245 aa).

Substrate contacts are provided by R60 and N162.

The protein belongs to the acetylglutamate kinase family. LysZ subfamily.

It localises to the cytoplasm. The catalysed reaction is [amino-group carrier protein]-C-terminal-N-(1,4-dicarboxybutan-1-yl)-L-glutamine + ATP = [amino-group carrier protein]-C-terminal-N-(1-carboxy-5-phosphooxy-5-oxopentan-1-yl)-L-glutamine + ADP. It catalyses the reaction [amino-group carrier protein]-C-terminal-gamma-(L-glutamyl)-L-glutamate + ATP = [amino-group carrier protein]-C-terminal-gamma-(5-phospho-L-glutamyl)-L-glutamate + ADP. Its pathway is amino-acid biosynthesis; L-lysine biosynthesis via AAA pathway; L-lysine from L-alpha-aminoadipate (Thermus route): step 2/5. It participates in amino-acid biosynthesis; L-arginine biosynthesis. In terms of biological role, involved in both the arginine and lysine biosynthetic pathways. Phosphorylates the LysW-bound precursors glutamate (for arginine biosynthesis), respectively alpha-aminoadipate (for lysine biosynthesis). This chain is Putative [LysW]-aminoadipate/[LysW]-glutamate kinase, found in Pyrococcus abyssi (strain GE5 / Orsay).